A 172-amino-acid chain; its full sequence is Translation initiation factor IF-3 (172 aa).

It belongs to the IF-3 family. Monomer.

It is found in the cytoplasm. Its function is as follows. IF-3 binds to the 30S ribosomal subunit and shifts the equilibrium between 70S ribosomes and their 50S and 30S subunits in favor of the free subunits, thus enhancing the availability of 30S subunits on which protein synthesis initiation begins. The polypeptide is Translation initiation factor IF-3 (Campylobacter jejuni subsp. jejuni serotype O:6 (strain 81116 / NCTC 11828)).